We begin with the raw amino-acid sequence, 201 residues long: Large ribosomal subunit protein uL4 (201 aa).

The disordered stretch occupies residues 44–66 (KAQKTRAEVRGGGKKPWRQKGTG). The segment covering 55–66 (GGKKPWRQKGTG) has biased composition (basic residues).

It belongs to the universal ribosomal protein uL4 family. As to quaternary structure, part of the 50S ribosomal subunit.

One of the primary rRNA binding proteins, this protein initially binds near the 5'-end of the 23S rRNA. It is important during the early stages of 50S assembly. It makes multiple contacts with different domains of the 23S rRNA in the assembled 50S subunit and ribosome. In terms of biological role, forms part of the polypeptide exit tunnel. This chain is Large ribosomal subunit protein uL4, found in Alteromonas mediterranea (strain DSM 17117 / CIP 110805 / LMG 28347 / Deep ecotype).